The sequence spans 197 residues: uncharacterized protein (197 aa).

The signal sequence occupies residues Met-1–Ala-23. Residues Ser-24 to Thr-61 lie on the Extracellular side of the membrane. An N-linked (GlcNAc...) asparagine glycan is attached at Asn-26. Residues Leu-62–Phe-82 traverse the membrane as a helical segment. Residues His-83 to Ser-197 are Cytoplasmic-facing. Residues Met-94–Ser-180 are disordered. Basic and acidic residues-rich tracts occupy residues Arg-96–Ser-107 and His-125–Arg-136. Residues Cys-141 to Pro-161 show a composition bias toward low complexity. Positions Cys-162–Ser-171 are enriched in pro residues.

It is found in the membrane. This is an uncharacterized protein from Homo sapiens (Human).